Reading from the N-terminus, the 276-residue chain is Putative serine/threonine-protein kinase R436 (276 aa).

Positions 6–266 (YSLDKLIQNR…IKQKLNHFKT (261 aa)) constitute a Protein kinase domain. ATP contacts are provided by residues 12-20 (IQNRKSKRI) and K35. D132 (proton acceptor) is an active-site residue.

The protein belongs to the protein kinase superfamily. Ser/Thr protein kinase family.

The enzyme catalyses L-seryl-[protein] + ATP = O-phospho-L-seryl-[protein] + ADP + H(+). The catalysed reaction is L-threonyl-[protein] + ATP = O-phospho-L-threonyl-[protein] + ADP + H(+). In Acanthamoeba polyphaga (Amoeba), this protein is Putative serine/threonine-protein kinase R436.